The following is a 167-amino-acid chain: Translationally-controlled tumor protein homolog (167 aa).

The region spanning 1 to 167 (MLIFEDVISG…WKHGVKENKI (167 aa)) is the TCTP domain.

It belongs to the TCTP family.

It localises to the cytoplasm. Its subcellular location is the cytoskeleton. Functionally, involved in protein synthesis. Involved in microtubule stabilization. This Candida albicans (strain SC5314 / ATCC MYA-2876) (Yeast) protein is Translationally-controlled tumor protein homolog (TMA19).